Consider the following 122-residue polypeptide: MARIAGVNIPTNKRVVIALQYIHGIGAKKAEEITQKVNIPAERRVNQLTDAEVLQIRETIDRDYLVEGDLRREVSMNIKRLMDLGAYRGLRHRKQLPVRGQRTHTNARTRKGKAKPIAGKKK.

A disordered region spans residues 92 to 122; sequence HRKQLPVRGQRTHTNARTRKGKAKPIAGKKK.

The protein belongs to the universal ribosomal protein uS13 family. As to quaternary structure, part of the 30S ribosomal subunit. Forms a loose heterodimer with protein S19. Forms two bridges to the 50S subunit in the 70S ribosome.

Its function is as follows. Located at the top of the head of the 30S subunit, it contacts several helices of the 16S rRNA. In the 70S ribosome it contacts the 23S rRNA (bridge B1a) and protein L5 of the 50S subunit (bridge B1b), connecting the 2 subunits; these bridges are implicated in subunit movement. Contacts the tRNAs in the A and P-sites. The sequence is that of Small ribosomal subunit protein uS13 from Methylobacterium radiotolerans (strain ATCC 27329 / DSM 1819 / JCM 2831 / NBRC 15690 / NCIMB 10815 / 0-1).